A 527-amino-acid polypeptide reads, in one-letter code: 4-alpha-glucanotransferase (527 aa).

It belongs to the disproportionating enzyme family.

Its subcellular location is the cytoplasm. It catalyses the reaction Transfers a segment of a (1-&gt;4)-alpha-D-glucan to a new position in an acceptor, which may be glucose or a (1-&gt;4)-alpha-D-glucan.. In Chlamydia trachomatis serovar D (strain ATCC VR-885 / DSM 19411 / UW-3/Cx), this protein is 4-alpha-glucanotransferase (malQ).